Reading from the N-terminus, the 259-residue chain is 5'-nucleotidase SurE (259 aa).

The a divalent metal cation site is built by D8, D9, S41, and N100.

It belongs to the SurE nucleotidase family. A divalent metal cation serves as cofactor.

It is found in the cytoplasm. The catalysed reaction is a ribonucleoside 5'-phosphate + H2O = a ribonucleoside + phosphate. Functionally, nucleotidase that shows phosphatase activity on nucleoside 5'-monophosphates. This is 5'-nucleotidase SurE from Natranaerobius thermophilus (strain ATCC BAA-1301 / DSM 18059 / JW/NM-WN-LF).